The primary structure comprises 284 residues: NH(3)-dependent NAD(+) synthetase (284 aa).

51-58 (GISGGIDS) contacts ATP. D57 serves as a coordination point for Mg(2+). A deamido-NAD(+)-binding site is contributed by R148. T168 is an ATP binding site. Mg(2+) is bound at residue E173. Positions 181 and 188 each coordinate deamido-NAD(+). ATP-binding residues include K197 and T219. 268-269 (HK) serves as a coordination point for deamido-NAD(+).

The protein belongs to the NAD synthetase family. As to quaternary structure, homodimer.

The enzyme catalyses deamido-NAD(+) + NH4(+) + ATP = AMP + diphosphate + NAD(+) + H(+). It participates in cofactor biosynthesis; NAD(+) biosynthesis; NAD(+) from deamido-NAD(+) (ammonia route): step 1/1. Functionally, catalyzes the ATP-dependent amidation of deamido-NAD to form NAD. Uses ammonia as a nitrogen source. This is NH(3)-dependent NAD(+) synthetase from Burkholderia pseudomallei (strain 1106a).